The sequence spans 806 residues: Phenylalanine--tRNA ligase beta subunit (806 aa).

In terms of domain architecture, tRNA-binding spans 40 to 155 (NKGVKGVVVG…SDAEVGADAL (116 aa)). The region spanning 409–484 (VQERTVSVTA…RLYGYDHIPV (76 aa)) is the B5 domain. Aspartate 462, aspartate 468, glutamate 471, and glutamate 472 together coordinate Mg(2+). An FDX-ACB domain is found at 712-805 (PRFPSMTRDM…VEEKFGAELR (94 aa)).

Belongs to the phenylalanyl-tRNA synthetase beta subunit family. Type 1 subfamily. Tetramer of two alpha and two beta subunits. Mg(2+) serves as cofactor.

The protein resides in the cytoplasm. The catalysed reaction is tRNA(Phe) + L-phenylalanine + ATP = L-phenylalanyl-tRNA(Phe) + AMP + diphosphate + H(+). This is Phenylalanine--tRNA ligase beta subunit from Bacillus cereus (strain ZK / E33L).